The sequence spans 63 residues: Large ribosomal subunit protein bL28c (63 aa).

This sequence belongs to the bacterial ribosomal protein bL28 family.

Its subcellular location is the plastid. It is found in the chloroplast. The sequence is that of Large ribosomal subunit protein bL28c from Pyropia yezoensis (Susabi-nori).